The following is a 1260-amino-acid chain: Ankyrin repeat and sterile alpha motif domain-containing protein 1B (1260 aa).

ANK repeat units lie at residues 2 to 31 (GKDQ…GGIL), 58 to 87 (SGYT…STNV), 91 to 120 (KGYF…SHSR), 127 to 156 (ENET…DPTI), 160 to 189 (KLET…NLMS), 193 to 222 (RKHT…DVSC), and 225 to 254 (EKGS…DANI). The tract at residues 298–326 (HAQEDTAQETRLSSPAQSPSQKTKSETVT) is disordered. The span at 306-326 (ETRLSSPAQSPSQKTKSETVT) shows a compositional bias: polar residues. 5 positions are modified to phosphoserine: Ser310, Ser311, Ser315, Ser354, and Ser365. Disordered regions lie at residues 368-402 (ELGK…SCGP), 491-513 (PGTG…PSPD), and 556-642 (GCTS…EASL). Residues 372–385 (NGSQSVRTSSTINL) show a composition bias toward polar residues. Thr504 is modified (phosphothreonine). A phosphoserine mark is found at Ser508 and Ser511. The span at 556–575 (GCTSFTSSPPVSPPTSSVET) shows a compositional bias: low complexity. The segment covering 576–588 (TEIKNEGAEHTDD) has biased composition (basic and acidic residues). Ser739 is subject to Phosphoserine. The segment at 754-778 (VNWSKSSTAERSSKDNSERTPSFTS) is disordered. Phosphothreonine is present on Thr773. Position 775 is a phosphoserine (Ser775). SAM domains follow at residues 810 to 876 (CPVQ…LPKM) and 884 to 949 (YHPT…RLHE). A Phosphotyrosine modification is found at Tyr901. Positions 935–938 (HRKR) match the Nuclear localization signal motif. Positions 946-989 (RLHEDPPQKPPRSITLREPSGNHTPPQLSPSLSQSTYTTGGSLD) are disordered. Residues 969 to 984 (TPPQLSPSLSQSTYTT) are compositionally biased toward low complexity. Ser974 carries the phosphoserine modification. Residue Tyr1007 is modified to Phosphotyrosine. In terms of domain architecture, PID spans 1056 to 1213 (IFQSCDYKAF…SFENKPSKPI (158 aa)). Positions 1197–1217 (HSSTLPESFENKPSKPIPKPR) are disordered.

Interacts with EPHA8. Isoform 2 interacts with COIL. Isoform 3 interacts with DLG4. Post-translationally, nuclear translocation of isoform 3 requires an NMDAR-dependent proteolytic cleavage. A 35 kDa N-terminal form shuttles to the nucleus. As to expression, isoform 3 is brain specific and highly enriched in the postsynaptic densities (PSDs), especially in cortical, striatal and hippocampal PSDs.

It localises to the cytoplasm. The protein localises to the nucleus. The protein resides in the postsynaptic density. It is found in the cell projection. Its subcellular location is the dendritic spine. It localises to the cajal body. Its function is as follows. Isoform 2 may participate in the regulation of nucleoplasmic coilin protein interactions in neuronal and transformed cells. Isoform 3 can regulate global protein synthesis by altering nucleolar numbers. This is Ankyrin repeat and sterile alpha motif domain-containing protein 1B (Anks1b) from Rattus norvegicus (Rat).